The primary structure comprises 509 residues: MSDAQNAKTVNEAASVQPDENHVIAERREKLKAIREQGVAFPNDFRPEHIAQSLHDSYDAVEAEALESQALGVAIAGRMMLKRVMGKASFATVQDRSGRIQIFITRENVGEATYDAFKKWDLGDIIAARGTLFKTKTGELSVKVSELRLLTKSLRPLPEKFHGLADQETKYRQRYVDLIVSEETRKTFVARSKIVAAIRAFMLSHEFLEVETPMLHPIPGGAAAKPFITHHNALDLQMYMRIAPELYLKRLVVGGFERVFEINRNFRNEGLSVRHNPEFTMMEFYAAYTDYKWLMDFTESCIRAAAIAACGSAVVEYQGRELDLGKPFERLTIIGAIQKYAPQYTLEQLSDQAFLRQELKKFGVEALPHLGLGALQLALFEETAESQLWNPTYIIDYPVEVSPLARASDSDPSITERYELFITGREIANGFSELNDAEDQAARFHAQVAAKEAGDDEAMYYDGDFIRALEYGMPPTGGCGIGIDRLVMLLTDSPSIRDVILFPHMRPEH.

Positions 419 and 426 each coordinate Mg(2+).

It belongs to the class-II aminoacyl-tRNA synthetase family. Homodimer. Mg(2+) is required as a cofactor.

It is found in the cytoplasm. It catalyses the reaction tRNA(Lys) + L-lysine + ATP = L-lysyl-tRNA(Lys) + AMP + diphosphate. The polypeptide is Lysine--tRNA ligase (Methylobacillus flagellatus (strain ATCC 51484 / DSM 6875 / VKM B-1610 / KT)).